Reading from the N-terminus, the 191-residue chain is Negative modulator of initiation of replication (191 aa).

The tract at residues alanine 96–valine 97 is interaction with DNA.

This sequence belongs to the SeqA family. In terms of assembly, homodimer. Polymerizes to form helical filaments.

Its subcellular location is the cytoplasm. Negative regulator of replication initiation, which contributes to regulation of DNA replication and ensures that replication initiation occurs exactly once per chromosome per cell cycle. Binds to pairs of hemimethylated GATC sequences in the oriC region, thus preventing assembly of replication proteins and re-initiation at newly replicated origins. Repression is relieved when the region becomes fully methylated. The polypeptide is Negative modulator of initiation of replication (Shewanella amazonensis (strain ATCC BAA-1098 / SB2B)).